The chain runs to 550 residues: Carboxypeptidase Y homolog A (550 aa).

The first 18 residues, 1–18 (MKSLVLGLLVGSAIASGP), serve as a signal peptide directing secretion. Positions 19–131 (LQHVLHAPPD…KLAQYDLRIK (113 aa)) are excised as a propeptide. Residues 20-39 (QHVLHAPPDPEPKPEPEPQV) are disordered. Intrachain disulfides connect Cys-185–Cys-424, Cys-319–Cys-333, Cys-343–Cys-366, Cys-350–Cys-359, and Cys-388–Cys-394. Asn-203 and Asn-216 each carry an N-linked (GlcNAc...) asparagine glycan. Ser-272 is an active-site residue. Asn-289 carries an N-linked (GlcNAc...) asparagine glycan. Asn-387 carries an N-linked (GlcNAc...) asparagine glycan. The active site involves Asp-463. Residues Asn-493 and Asn-514 are each glycosylated (N-linked (GlcNAc...) asparagine). Residue His-525 is part of the active site.

It belongs to the peptidase S10 family.

Its subcellular location is the vacuole. It carries out the reaction Release of a C-terminal amino acid with broad specificity.. In terms of biological role, vacuolar carboxypeptidase involved in degradation of small peptides. Digests preferentially peptides containing an aliphatic or hydrophobic residue in P1' position, as well as methionine, leucine or phenylalanine in P1 position of ester substrate. This Paracoccidioides brasiliensis (strain Pb03) protein is Carboxypeptidase Y homolog A (CPYA).